Consider the following 439-residue polypeptide: Ribosomal protein uS12 methylthiotransferase RimO (439 aa).

The MTTase N-terminal domain maps to 4 to 114 (PKVGFVSLGR…VVRAVHGVAP (111 aa)). Residues 133–370 (LTPRHYAYLK…MEHQQAISTA (238 aa)) enclose the Radical SAM core domain. [4Fe-4S] cluster contacts are provided by Cys147, Cys151, and Cys154. The TRAM domain occupies 373-439 (STRVGREIDV…EYDLWGERIA (67 aa)).

It belongs to the methylthiotransferase family. RimO subfamily. Requires [4Fe-4S] cluster as cofactor.

Its subcellular location is the cytoplasm. The catalysed reaction is L-aspartate(89)-[ribosomal protein uS12]-hydrogen + (sulfur carrier)-SH + AH2 + 2 S-adenosyl-L-methionine = 3-methylsulfanyl-L-aspartate(89)-[ribosomal protein uS12]-hydrogen + (sulfur carrier)-H + 5'-deoxyadenosine + L-methionine + A + S-adenosyl-L-homocysteine + 2 H(+). In terms of biological role, catalyzes the methylthiolation of an aspartic acid residue of ribosomal protein uS12. The sequence is that of Ribosomal protein uS12 methylthiotransferase RimO from Bordetella bronchiseptica (strain ATCC BAA-588 / NCTC 13252 / RB50) (Alcaligenes bronchisepticus).